We begin with the raw amino-acid sequence, 364 residues long: Putative acetyl-CoA C-acetyltransferase YhfS (364 aa).

The active-site Acyl-thioester intermediate is Cys82. His318 serves as the catalytic Proton acceptor.

Belongs to the thiolase-like superfamily. Thiolase family.

Functionally, may be involved in fatty acid metabolism. The protein is Putative acetyl-CoA C-acetyltransferase YhfS (yhfS) of Bacillus subtilis (strain 168).